The primary structure comprises 239 residues: Small ribosomal subunit protein uS2 (239 aa).

It belongs to the universal ribosomal protein uS2 family.

The chain is Small ribosomal subunit protein uS2 from Synechococcus sp. (strain CC9902).